A 332-amino-acid polypeptide reads, in one-letter code: Succinylglutamate desuccinylase (332 aa).

Zn(2+)-binding residues include His-59, Glu-62, and His-151. Glu-215 is an active-site residue.

This sequence belongs to the AspA/AstE family. Succinylglutamate desuccinylase subfamily. It depends on Zn(2+) as a cofactor.

The catalysed reaction is N-succinyl-L-glutamate + H2O = L-glutamate + succinate. Its pathway is amino-acid degradation; L-arginine degradation via AST pathway; L-glutamate and succinate from L-arginine: step 5/5. In terms of biological role, transforms N(2)-succinylglutamate into succinate and glutamate. The protein is Succinylglutamate desuccinylase of Pseudomonas aeruginosa (strain LESB58).